A 349-amino-acid polypeptide reads, in one-letter code: NADH-quinone oxidoreductase subunit H (349 aa).

8 helical membrane-spanning segments follow: residues 11–31, 83–103, 116–136, 162–182, 200–220, 252–272, 288–308, and 323–343; these read FPLLIIVGKTLLLLVILLLLV, GVFLLAPFVSATLALSTWAVI, VGLLYILAISSLEVYGVIMGG, IGFVLVTVILVSGSLDLTTIV, FLDWNWLVLFPMFIIFFISAL, LFFLGEYVAIVLMCALTTILF, VPGIIWFVLKVCFVFFWFAMV, and LGWKVFLPLSLAMVVITAAFL.

It belongs to the complex I subunit 1 family. As to quaternary structure, NDH-1 is composed of 14 different subunits. Subunits NuoA, H, J, K, L, M, N constitute the membrane sector of the complex.

The protein localises to the cell inner membrane. It catalyses the reaction a quinone + NADH + 5 H(+)(in) = a quinol + NAD(+) + 4 H(+)(out). Its function is as follows. NDH-1 shuttles electrons from NADH, via FMN and iron-sulfur (Fe-S) centers, to quinones in the respiratory chain. The immediate electron acceptor for the enzyme in this species is believed to be ubiquinone. Couples the redox reaction to proton translocation (for every two electrons transferred, four hydrogen ions are translocated across the cytoplasmic membrane), and thus conserves the redox energy in a proton gradient. This subunit may bind ubiquinone. This chain is NADH-quinone oxidoreductase subunit H, found in Bartonella henselae (strain ATCC 49882 / DSM 28221 / CCUG 30454 / Houston 1) (Rochalimaea henselae).